The sequence spans 114 residues: UPF0342 protein LCA_0622 (114 aa).

It belongs to the UPF0342 family.

This is UPF0342 protein LCA_0622 from Latilactobacillus sakei subsp. sakei (strain 23K) (Lactobacillus sakei subsp. sakei).